The following is a 235-amino-acid chain: Claudin-16 (235 aa).

Over 1–3 the chain is Cytoplasmic; it reads MRD. Residues 4 to 24 traverse the membrane as a helical segment; that stretch reads LLQYIACFFAFFSAGFLIVAT. Residues 25 to 79 are Extracellular-facing; that stretch reads WTDCWMVNADDSLEVSTKCRGLWWECVTNAFDGIRTCDEYDSILAEHPLKLVVTR. A helical transmembrane segment spans residues 80-100; that stretch reads ALMITADILAGFGFLTLLLGL. Residues 101 to 115 are Cytoplasmic-facing; that stretch reads DCVKFLPDEPYIKVR. Residues 116 to 136 form a helical membrane-spanning segment; it reads ICFVAGATLLIAGTPGIIGSV. Topologically, residues 137-169 are extracellular; it reads WYAVDVYVERSTLVLHNIFLGIQYKFGWSCWLG. The helical transmembrane segment at 170-190 threads the bilayer; that stretch reads MAGSLGCFLAGAVLTCCLYLF. Residues 191-235 are Cytoplasmic-facing; the sequence is KDVGPERNYPYSLRKAYSAAGVSMAKSYSAPRTETAKMYAVDTRV. Positions 233-235 match the Interaction with TJP1 motif; it reads TRV.

Belongs to the claudin family. In terms of assembly, can form heteropolymeric tight junction strands with other claudins. Interacts with CLDN19. Interacts (via PDZ-binding motif TRV) with TJP1 (via PDZ domain). Cannot form tight junction strands on its own. In terms of tissue distribution, kidney-specific, including the thick ascending limb of Henle (TAL).

The protein resides in the cell junction. It is found in the tight junction. Its subcellular location is the cell membrane. It catalyses the reaction Mg(2+)(in) = Mg(2+)(out). It carries out the reaction Ca(2+)(in) = Ca(2+)(out). The catalysed reaction is Na(+)(in) = Na(+)(out). The enzyme catalyses K(+)(in) = K(+)(out). It catalyses the reaction Rb(+)(in) = Rb(+)(out). It carries out the reaction Cs(+)(in) = Cs(+)(out). The catalysed reaction is Li(+)(in) = Li(+)(out). Functionally, forms paracellular channels: coassembles with CLDN19 into tight junction strands with cation-selective channels through the strands, conveying epithelial permeability in a process known as paracellular tight junction permeability. Involved in the maintenance of ion gradients along the nephron. In the thick ascending limb (TAL) of Henle's loop, facilitates sodium paracellular permeability from the interstitial compartment to the lumen, contributing to the lumen-positive transepithelial potential that drives paracellular magnesium and calcium reabsorption. The sequence is that of Claudin-16 from Homo sapiens (Human).